A 234-amino-acid polypeptide reads, in one-letter code: tRNA (guanine-N(1)-)-methyltransferase (234 aa).

S-adenosyl-L-methionine contacts are provided by residues glycine 115 and 135–140; that span reads VGDYIL.

The protein belongs to the RNA methyltransferase TrmD family. Homodimer.

It localises to the cytoplasm. The catalysed reaction is guanosine(37) in tRNA + S-adenosyl-L-methionine = N(1)-methylguanosine(37) in tRNA + S-adenosyl-L-homocysteine + H(+). In terms of biological role, specifically methylates guanosine-37 in various tRNAs. In Rickettsia akari (strain Hartford), this protein is tRNA (guanine-N(1)-)-methyltransferase.